The primary structure comprises 864 residues: Putative Gly-rich membrane protein Bcell_0380 (864 aa).

A helical transmembrane segment spans residues 7 to 27 (ITFLAAFICIIFVIYAIYHSV). The tract at residues 372-399 (TVENSFYDEDTTGQSDTGKGTPMSTADM) is disordered. Over residues 383–395 (TGQSDTGKGTPMS) the composition is skewed to polar residues.

Its subcellular location is the cell membrane. This Evansella cellulosilytica (strain ATCC 21833 / DSM 2522 / FERM P-1141 / JCM 9156 / N-4) (Bacillus cellulosilyticus) protein is Putative Gly-rich membrane protein Bcell_0380.